A 390-amino-acid chain; its full sequence is 1-deoxy-D-xylulose 5-phosphate reductoisomerase (390 aa).

5 residues coordinate NADPH: threonine 18, glycine 19, serine 20, isoleucine 21, and asparagine 130. Lysine 131 lines the 1-deoxy-D-xylulose 5-phosphate pocket. Residue glutamate 132 coordinates NADPH. Mn(2+) is bound at residue aspartate 156. 1-deoxy-D-xylulose 5-phosphate contacts are provided by serine 157, glutamate 158, serine 182, and histidine 205. A Mn(2+)-binding site is contributed by glutamate 158. Glycine 211 serves as a coordination point for NADPH. 1-deoxy-D-xylulose 5-phosphate contacts are provided by serine 218, asparagine 223, lysine 224, and glutamate 227. Glutamate 227 contributes to the Mn(2+) binding site.

The protein belongs to the DXR family. The cofactor is Mg(2+). Requires Mn(2+) as cofactor.

It catalyses the reaction 2-C-methyl-D-erythritol 4-phosphate + NADP(+) = 1-deoxy-D-xylulose 5-phosphate + NADPH + H(+). The protein operates within isoprenoid biosynthesis; isopentenyl diphosphate biosynthesis via DXP pathway; isopentenyl diphosphate from 1-deoxy-D-xylulose 5-phosphate: step 1/6. Catalyzes the NADPH-dependent rearrangement and reduction of 1-deoxy-D-xylulose-5-phosphate (DXP) to 2-C-methyl-D-erythritol 4-phosphate (MEP). This chain is 1-deoxy-D-xylulose 5-phosphate reductoisomerase, found in Bacteroides thetaiotaomicron (strain ATCC 29148 / DSM 2079 / JCM 5827 / CCUG 10774 / NCTC 10582 / VPI-5482 / E50).